The sequence spans 95 residues: Histone-like DNA-binding protein (95 aa).

It belongs to the bacterial histone-like protein family.

The polypeptide is Histone-like DNA-binding protein (Rickettsia conorii (strain ATCC VR-613 / Malish 7)).